The primary structure comprises 166 residues: MNNKKLSLTLPLVGILALTACNQPKEEIDPLSQLREKGECLDCNLAGADLREFNLENARLNRSDLSGANLSGVNLRRALLDRANLTGANLSETDLTEAALTEANLAGADLSGANLERSFLRDVDLTGANLKGANLAWANLTAANLTDVDLEEAEFWETTMPDGSRR.

3 Pentapeptide repeat domains span residues glycine 38 to arginine 77, alanine 78 to arginine 117, and serine 118 to glutamate 157.

This is an uncharacterized protein from Synechocystis sp. (strain ATCC 27184 / PCC 6803 / Kazusa).